Consider the following 271-residue polypeptide: (21S)-21-acetoxyl-apo-melianone synthase SDR (271 aa).

Ser-150 functions as the Proton donor in the catalytic mechanism. Tyr-163 functions as the Proton acceptor in the catalytic mechanism. Lys-167 acts as the Proton donor/acceptor in catalysis.

It belongs to the short-chain dehydrogenases/reductases (SDR) family. Mainly expressed in petioles.

The catalysed reaction is 21-O-acetyl-isomeliandiol + A = (21S)-21-acetoxyl-apo-melianone + AH2. Its pathway is secondary metabolite biosynthesis; terpenoid biosynthesis. Its function is as follows. Oxidoreductase involved in the biosynthesis of limonoids triterpene natural products such as azadirachtin, an antifeedant widely used as bioinsecticide, and possessing many medicinal applications including anti-tumoral, anti-malarial, anti-rheumatic, antibacterial, anti-inflammatory, anti-pyretic and diuretic effects. Catalyzes the oxidation of 21-O-acetyl-isomeliandiol to (21S)-21-acetoxyl-apo-melianone. This Melia azedarach (Chinaberry tree) protein is (21S)-21-acetoxyl-apo-melianone synthase SDR.